The chain runs to 1399 residues: DNA-directed RNA polymerase subunit beta' (1399 aa).

Zn(2+) is bound by residues C71, C73, C86, and C89. Residues D462, D464, and D466 each contribute to the Mg(2+) site. Zn(2+) is bound by residues C810, C884, C891, and C894. Residues 1379–1399 (KQAAIVPSQPEPQPLALPPAE) form a disordered region. Over residues 1387 to 1399 (QPEPQPLALPPAE) the composition is skewed to pro residues.

Belongs to the RNA polymerase beta' chain family. In terms of assembly, the RNAP catalytic core consists of 2 alpha, 1 beta, 1 beta' and 1 omega subunit. When a sigma factor is associated with the core the holoenzyme is formed, which can initiate transcription. It depends on Mg(2+) as a cofactor. The cofactor is Zn(2+).

It catalyses the reaction RNA(n) + a ribonucleoside 5'-triphosphate = RNA(n+1) + diphosphate. Functionally, DNA-dependent RNA polymerase catalyzes the transcription of DNA into RNA using the four ribonucleoside triphosphates as substrates. The sequence is that of DNA-directed RNA polymerase subunit beta' from Bradyrhizobium sp. (strain BTAi1 / ATCC BAA-1182).